Consider the following 398-residue polypeptide: Acetate kinase 2 (398 aa).

A Mg(2+)-binding site is contributed by N7. K14 lines the ATP pocket. Residue R91 participates in substrate binding. The Proton donor/acceptor role is filled by D148. ATP contacts are provided by residues 208-212 (HLGNG), 283-285 (DFR), and 331-335 (GVGEN). Residue E384 participates in Mg(2+) binding.

The protein belongs to the acetokinase family. Homodimer. Mg(2+) serves as cofactor. It depends on Mn(2+) as a cofactor.

Its subcellular location is the cytoplasm. The catalysed reaction is acetate + ATP = acetyl phosphate + ADP. The protein operates within metabolic intermediate biosynthesis; acetyl-CoA biosynthesis; acetyl-CoA from acetate: step 1/2. Functionally, catalyzes the formation of acetyl phosphate from acetate and ATP. Can also catalyze the reverse reaction. This Clostridium perfringens (strain 13 / Type A) protein is Acetate kinase 2.